A 1102-amino-acid polypeptide reads, in one-letter code: DNA-directed RNA polymerase subunit beta (1102 aa).

The disordered stretch occupies residues 1076–1102 (IDSQRRAPNRPTYESLHTEEDLEEEEV).

Belongs to the RNA polymerase beta chain family. In terms of assembly, in cyanobacteria the RNAP catalytic core is composed of 2 alpha, 1 beta, 1 beta', 1 gamma and 1 omega subunit. When a sigma factor is associated with the core the holoenzyme is formed, which can initiate transcription.

It carries out the reaction RNA(n) + a ribonucleoside 5'-triphosphate = RNA(n+1) + diphosphate. DNA-dependent RNA polymerase catalyzes the transcription of DNA into RNA using the four ribonucleoside triphosphates as substrates. The chain is DNA-directed RNA polymerase subunit beta from Synechocystis sp. (strain ATCC 27184 / PCC 6803 / Kazusa).